A 342-amino-acid polypeptide reads, in one-letter code: N-acetyl-gamma-glutamyl-phosphate reductase (342 aa).

Cys-147 is an active-site residue.

This sequence belongs to the NAGSA dehydrogenase family. Type 1 subfamily.

It is found in the cytoplasm. It catalyses the reaction N-acetyl-L-glutamate 5-semialdehyde + phosphate + NADP(+) = N-acetyl-L-glutamyl 5-phosphate + NADPH + H(+). It functions in the pathway amino-acid biosynthesis; L-arginine biosynthesis; N(2)-acetyl-L-ornithine from L-glutamate: step 3/4. Catalyzes the NADPH-dependent reduction of N-acetyl-5-glutamyl phosphate to yield N-acetyl-L-glutamate 5-semialdehyde. The chain is N-acetyl-gamma-glutamyl-phosphate reductase from Campylobacter jejuni subsp. jejuni serotype O:6 (strain 81116 / NCTC 11828).